A 205-amino-acid polypeptide reads, in one-letter code: Adenylyl-sulfate kinase (205 aa).

An ATP-binding site is contributed by 31-38 (GLSGAGKS). Ser-105 serves as the catalytic Phosphoserine intermediate.

It belongs to the APS kinase family.

It carries out the reaction adenosine 5'-phosphosulfate + ATP = 3'-phosphoadenylyl sulfate + ADP + H(+). It participates in sulfur metabolism; hydrogen sulfide biosynthesis; sulfite from sulfate: step 2/3. Catalyzes the synthesis of activated sulfate. The protein is Adenylyl-sulfate kinase of Shewanella baltica (strain OS195).